The primary structure comprises 256 residues: Thiazole synthase (256 aa).

Lys-95 functions as the Schiff-base intermediate with DXP in the catalytic mechanism. Residues Gly-156, 182–183 (AG), and 204–205 (NT) each bind 1-deoxy-D-xylulose 5-phosphate.

It belongs to the ThiG family. In terms of assembly, homotetramer. Forms heterodimers with either ThiH or ThiS.

The protein resides in the cytoplasm. It catalyses the reaction [ThiS sulfur-carrier protein]-C-terminal-Gly-aminoethanethioate + 2-iminoacetate + 1-deoxy-D-xylulose 5-phosphate = [ThiS sulfur-carrier protein]-C-terminal Gly-Gly + 2-[(2R,5Z)-2-carboxy-4-methylthiazol-5(2H)-ylidene]ethyl phosphate + 2 H2O + H(+). The protein operates within cofactor biosynthesis; thiamine diphosphate biosynthesis. Its function is as follows. Catalyzes the rearrangement of 1-deoxy-D-xylulose 5-phosphate (DXP) to produce the thiazole phosphate moiety of thiamine. Sulfur is provided by the thiocarboxylate moiety of the carrier protein ThiS. In vitro, sulfur can be provided by H(2)S. The protein is Thiazole synthase of Citrobacter koseri (strain ATCC BAA-895 / CDC 4225-83 / SGSC4696).